Here is a 392-residue protein sequence, read N- to C-terminus: Bifunctional enzyme Fae/Hps (392 aa).

Positions 1–161 (MFQIGEALMG…EESNKSTHAI (161 aa)) are formaldehyde-activating enzyme. Catalysis depends on H17, which acts as the Proton donor. Residues D19, L48, K66, T68, and Q83 each coordinate substrate. Residues 162 to 392 (MGFKVTRLWD…IDQFRVMTDF (231 aa)) form a 3-hexulose-6-phosphate synthase region.

The protein in the N-terminal section; belongs to the formaldehyde-activating enzyme family. In the C-terminal section; belongs to the HPS/KGPDC family. HPS subfamily.

It catalyses the reaction 5,6,7,8-tetrahydromethanopterin + formaldehyde = 5,10-methylenetetrahydromethanopterin + H2O. The enzyme catalyses D-ribulose 5-phosphate + formaldehyde = D-arabino-hex-3-ulose 6-phosphate. Its pathway is carbohydrate biosynthesis; D-ribose 5-phosphate biosynthesis. Functionally, catalyzes the condensation of formaldehyde with tetrahydromethanopterin (H(4)MPT) to 5,10-methylenetetrahydromethanopterin. Its function is as follows. Catalyzes the reversible formation of ribulose-5-phosphate and formaldehyde from 3-hexulose-6-phosphate. In Methanosarcina acetivorans (strain ATCC 35395 / DSM 2834 / JCM 12185 / C2A), this protein is Bifunctional enzyme Fae/Hps.